Reading from the N-terminus, the 364-residue chain is 3-isopropylmalate dehydrogenase (364 aa).

Glycine 79–glutamate 92 is a binding site for NAD(+). 4 residues coordinate substrate: arginine 100, arginine 110, arginine 139, and aspartate 228. Mg(2+) is bound by residues aspartate 228, aspartate 252, and aspartate 256. An NAD(+)-binding site is contributed by glycine 286–asparagine 298.

Belongs to the isocitrate and isopropylmalate dehydrogenases family. LeuB type 1 subfamily. As to quaternary structure, homodimer. Mg(2+) serves as cofactor. The cofactor is Mn(2+).

The protein localises to the cytoplasm. The enzyme catalyses (2R,3S)-3-isopropylmalate + NAD(+) = 4-methyl-2-oxopentanoate + CO2 + NADH. It participates in amino-acid biosynthesis; L-leucine biosynthesis; L-leucine from 3-methyl-2-oxobutanoate: step 3/4. Functionally, catalyzes the oxidation of 3-carboxy-2-hydroxy-4-methylpentanoate (3-isopropylmalate) to 3-carboxy-4-methyl-2-oxopentanoate. The product decarboxylates to 4-methyl-2 oxopentanoate. This Blochmanniella floridana protein is 3-isopropylmalate dehydrogenase.